Reading from the N-terminus, the 248-residue chain is Transcriptional activator protein FnrL (248 aa).

Residues 154–232 (KTAREKIASL…KRHVIVTDFA (79 aa)) form the HTH crp-type domain. The segment at residues 191–210 (REEMADYLGLTLETVSRQVS) is a DNA-binding region (H-T-H motif).

In terms of biological role, anaerobic regulatory protein; transcriptional activator of hemA. Appears to regulate other genes. In Cereibacter sphaeroides (strain ATCC 17023 / DSM 158 / JCM 6121 / CCUG 31486 / LMG 2827 / NBRC 12203 / NCIMB 8253 / ATH 2.4.1.) (Rhodobacter sphaeroides), this protein is Transcriptional activator protein FnrL (fnrL).